We begin with the raw amino-acid sequence, 182 residues long: ATP-dependent protease subunit HslV (182 aa).

Residue Thr12 is part of the active site. Na(+)-binding residues include Ala167, Cys170, and Thr173.

The protein belongs to the peptidase T1B family. HslV subfamily. A double ring-shaped homohexamer of HslV is capped on each side by a ring-shaped HslU homohexamer. The assembly of the HslU/HslV complex is dependent on binding of ATP.

It is found in the cytoplasm. It catalyses the reaction ATP-dependent cleavage of peptide bonds with broad specificity.. Its activity is regulated as follows. Allosterically activated by HslU binding. In terms of biological role, protease subunit of a proteasome-like degradation complex believed to be a general protein degrading machinery. The sequence is that of ATP-dependent protease subunit HslV from Pelodictyon phaeoclathratiforme (strain DSM 5477 / BU-1).